The sequence spans 862 residues: DNA gyrase subunit A (862 aa).

The 464-residue stretch at 38–501 (LPDARDGLKP…DYDDIDVEDL (464 aa)) folds into the Topo IIA-type catalytic domain. Residue Tyr126 is the O-(5'-phospho-DNA)-tyrosine intermediate of the active site. Positions 528–534 (QKRGGKG) match the GyrA-box motif. Positions 843–862 (KEESDDDDIVADDTQEQDME) are disordered. Residues 845-862 (ESDDDDIVADDTQEQDME) are compositionally biased toward acidic residues.

The protein belongs to the type II topoisomerase GyrA/ParC subunit family. In terms of assembly, heterotetramer, composed of two GyrA and two GyrB chains. In the heterotetramer, GyrA contains the active site tyrosine that forms a transient covalent intermediate with DNA, while GyrB binds cofactors and catalyzes ATP hydrolysis.

Its subcellular location is the cytoplasm. The enzyme catalyses ATP-dependent breakage, passage and rejoining of double-stranded DNA.. Functionally, a type II topoisomerase that negatively supercoils closed circular double-stranded (ds) DNA in an ATP-dependent manner to modulate DNA topology and maintain chromosomes in an underwound state. Negative supercoiling favors strand separation, and DNA replication, transcription, recombination and repair, all of which involve strand separation. Also able to catalyze the interconversion of other topological isomers of dsDNA rings, including catenanes and knotted rings. Type II topoisomerases break and join 2 DNA strands simultaneously in an ATP-dependent manner. The polypeptide is DNA gyrase subunit A (Campylobacter fetus).